Consider the following 208-residue polypeptide: Probable GTP-binding protein EngB (208 aa).

Residues 18 to 187 (KQFEICVIGR…FALMKKVVIQ (170 aa)) form the EngB-type G domain. GTP-binding positions include 26 to 33 (GRSNVGKS), 52 to 56 (GRTQL), 69 to 72 (DLPG), 135 to 138 (NKLD), and 166 to 168 (VSA). Positions 33 and 54 each coordinate Mg(2+).

Belongs to the TRAFAC class TrmE-Era-EngA-EngB-Septin-like GTPase superfamily. EngB GTPase family. The cofactor is Mg(2+).

In terms of biological role, necessary for normal cell division and for the maintenance of normal septation. The sequence is that of Probable GTP-binding protein EngB from Ureaplasma parvum serovar 3 (strain ATCC 27815 / 27 / NCTC 11736).